A 457-amino-acid polypeptide reads, in one-letter code: MSAENGSPGLPNGGVCCATDSGRCSLVGNKVTVVLGAQWGDEGKGKVVDLLAQDADIVCRCQGGNNAGHTVVVDSVEYDFHLLPSGIINQNAIAFIGNGVVIHLPGLFEEAEKNLKKGQGLVGWEKRLCISDRAHIVFDFHQAADGIQEQQRQEQAGKNLGTTKKGIGPVYSSKAARSGLRMCDLVSDFSEFSQRFKLLAKQYKSMYPSLEIDIDGELKKLQDYADRVKPMVKDGVYYLYEALHGPPKNILVEGANAALLDIDFGTYPFVTSSNCTVGGVCTGLGIPPQSVGDVYGVVKAYTTRVGIGAFPTEQNNDTGEMLQTRGHEYGVTTGRKRRCGWLDLVLLRYAHMINGFTALALAKLDILDVLSEIKVGVSYKIDGKKIPHFPANQEVLNRVEVEYETLPGWNTDTCNVRTFEELPENAKKYVRYIELELGIPIKWIGVGKSRESMIQLF.

Residues 40-46 (GDEGKGK) and 68-70 (GHT) contribute to the GTP site. Aspartate 41 functions as the Proton acceptor in the catalytic mechanism. Residues aspartate 41 and glycine 68 each coordinate Mg(2+). Residue aspartate 41 coordinates substrate. IMP is bound by residues 41–44 (DEGK), 66–69 (NAGH), threonine 163, arginine 177, asparagine 256, threonine 271, and arginine 335. Histidine 69 acts as the Proton donor in catalysis. A substrate-binding site is contributed by 331–337 (VTTGRKR). Residues arginine 337, 363–365 (KLD), and 445–448 (GVGK) contribute to the GTP site.

This sequence belongs to the adenylosuccinate synthetase family. In terms of assembly, homodimer. The cofactor is Mg(2+).

It is found in the cytoplasm. Its subcellular location is the mitochondrion. The catalysed reaction is IMP + L-aspartate + GTP = N(6)-(1,2-dicarboxyethyl)-AMP + GDP + phosphate + 2 H(+). It functions in the pathway purine metabolism; AMP biosynthesis via de novo pathway; AMP from IMP: step 1/2. Inhibited competitively by AMP and IMP and non-competitively by fructose 1,6-bisphosphate. Its function is as follows. Plays an important role in the de novo pathway and in the salvage pathway of purine nucleotide biosynthesis. Catalyzes the first committed step in the biosynthesis of AMP from IMP. The sequence is that of Adenylosuccinate synthetase isozyme 2 B (adss2-b) from Xenopus tropicalis (Western clawed frog).